We begin with the raw amino-acid sequence, 196 residues long: Large ribosomal subunit protein bL25 (196 aa).

This sequence belongs to the bacterial ribosomal protein bL25 family. CTC subfamily. In terms of assembly, part of the 50S ribosomal subunit; part of the 5S rRNA/L5/L18/L25 subcomplex. Contacts the 5S rRNA. Binds to the 5S rRNA independently of L5 and L18.

In terms of biological role, this is one of the proteins that binds to the 5S RNA in the ribosome where it forms part of the central protuberance. The protein is Large ribosomal subunit protein bL25 of Geotalea daltonii (strain DSM 22248 / JCM 15807 / FRC-32) (Geobacter daltonii).